The following is a 216-amino-acid chain: Ceramide-1-phosphate transfer protein (216 aa).

An N-acylsphingoid base 1-phosphate contacts are provided by aspartate 56, lysine 60, arginine 108, arginine 112, and histidine 152.

This sequence belongs to the GLTP family.

It localises to the cytoplasm. It is found in the cytosol. Its subcellular location is the golgi apparatus. The protein localises to the trans-Golgi network membrane. The protein resides in the cell membrane. It localises to the endosome membrane. It is found in the nucleus outer membrane. It carries out the reaction N-(hexadecanoyl)-sphing-4-enine-1-phosphate(in) = N-(hexadecanoyl)-sphing-4-enine-1-phosphate(out). It catalyses the reaction N-(9Z-octadecenoyl)-sphing-4-enine-1-phosphate(in) = N-(9Z-octadecenoyl)-sphing-4-enine-1-phosphate(out). In terms of biological role, mediates the intracellular transfer of ceramide-1-phosphate (C1P) between organelle membranes and the cell membrane. Required for normal structure of the Golgi stacks. Can bind phosphoceramides with a variety of aliphatic chains, but has a preference for lipids with saturated C16:0 or monounsaturated C18:1 aliphatic chains, and is inefficient with phosphoceramides containing lignoceryl (C24:0). Plays a role in the regulation of the cellular levels of ceramide-1-phosphate, and thereby contributes to the regulation of phospholipase PLA2G4A activity and the release of arachidonic acid. Has no activity with galactosylceramide, lactosylceramide, sphingomyelin, phosphatidylcholine, phosphatidic acid and ceramide. C1P transfer is stimulated by phosphatidylserine in C1P source vesicles. Regulates autophagy, inflammasome mediated IL1B and IL18 processing, and pyroptosis, but not apoptosis. In Rattus norvegicus (Rat), this protein is Ceramide-1-phosphate transfer protein (Cptp).